The sequence spans 493 residues: Probable mannosyl-oligosaccharide alpha-1,2-mannosidase 1B (493 aa).

The first 18 residues, 1-18 (MHLPSLSVALALVSSSLA), serve as a signal peptide directing secretion. Residues Asn-87 and Asn-174 are each glycosylated (N-linked (GlcNAc...) asparagine). A disulfide bridge connects residues Cys-324 and Cys-353. Glu-367 (proton donor) is an active-site residue. A glycan (N-linked (GlcNAc...) asparagine) is linked at Asn-489.

Belongs to the glycosyl hydrolase 47 family. As to quaternary structure, monomer. Ca(2+) is required as a cofactor. It depends on Mg(2+) as a cofactor.

Its subcellular location is the cytoplasmic vesicle lumen. It catalyses the reaction N(4)-(alpha-D-Man-(1-&gt;2)-alpha-D-Man-(1-&gt;2)-alpha-D-Man-(1-&gt;3)-[alpha-D-Man-(1-&gt;2)-alpha-D-Man-(1-&gt;3)-[alpha-D-Man-(1-&gt;2)-alpha-D-Man-(1-&gt;6)]-alpha-D-Man-(1-&gt;6)]-beta-D-Man-(1-&gt;4)-beta-D-GlcNAc-(1-&gt;4)-beta-D-GlcNAc)-L-asparaginyl-[protein] (N-glucan mannose isomer 9A1,2,3B1,2,3) + 4 H2O = N(4)-(alpha-D-Man-(1-&gt;3)-[alpha-D-Man-(1-&gt;3)-[alpha-D-Man-(1-&gt;6)]-alpha-D-Man-(1-&gt;6)]-beta-D-Man-(1-&gt;4)-beta-D-GlcNAc-(1-&gt;4)-beta-D-GlcNAc)-L-asparaginyl-[protein] (N-glucan mannose isomer 5A1,2) + 4 beta-D-mannose. It carries out the reaction N(4)-(alpha-D-Man-(1-&gt;2)-alpha-D-Man-(1-&gt;2)-alpha-D-Man-(1-&gt;3)-[alpha-D-Man-(1-&gt;3)-[alpha-D-Man-(1-&gt;2)-alpha-D-Man-(1-&gt;6)]-alpha-D-Man-(1-&gt;6)]-beta-D-Man-(1-&gt;4)-beta-D-GlcNAc-(1-&gt;4)-beta-D-GlcNAc)-L-asparaginyl-[protein] (N-glucan mannose isomer 8A1,2,3B1,3) + 3 H2O = N(4)-(alpha-D-Man-(1-&gt;3)-[alpha-D-Man-(1-&gt;3)-[alpha-D-Man-(1-&gt;6)]-alpha-D-Man-(1-&gt;6)]-beta-D-Man-(1-&gt;4)-beta-D-GlcNAc-(1-&gt;4)-beta-D-GlcNAc)-L-asparaginyl-[protein] (N-glucan mannose isomer 5A1,2) + 3 beta-D-mannose. The protein operates within protein modification; protein glycosylation. In terms of biological role, involved in the maturation of Asn-linked oligosaccharides. Progressively trims alpha-1,2-linked mannose residues from Man(9)GlcNAc(2) to produce Man(5)GlcNAc(2). This chain is Probable mannosyl-oligosaccharide alpha-1,2-mannosidase 1B (mns1B), found in Neosartorya fischeri (strain ATCC 1020 / DSM 3700 / CBS 544.65 / FGSC A1164 / JCM 1740 / NRRL 181 / WB 181) (Aspergillus fischerianus).